We begin with the raw amino-acid sequence, 278 residues long: Tryptophan synthase alpha chain (278 aa).

Catalysis depends on proton acceptor residues E50 and D61.

This sequence belongs to the TrpA family. In terms of assembly, tetramer of two alpha and two beta chains.

The enzyme catalyses (1S,2R)-1-C-(indol-3-yl)glycerol 3-phosphate + L-serine = D-glyceraldehyde 3-phosphate + L-tryptophan + H2O. The protein operates within amino-acid biosynthesis; L-tryptophan biosynthesis; L-tryptophan from chorismate: step 5/5. Its function is as follows. The alpha subunit is responsible for the aldol cleavage of indoleglycerol phosphate to indole and glyceraldehyde 3-phosphate. This is Tryptophan synthase alpha chain from Afipia carboxidovorans (strain ATCC 49405 / DSM 1227 / KCTC 32145 / OM5) (Oligotropha carboxidovorans).